The following is a 397-amino-acid chain: Succinyl-diaminopimelate desuccinylase (397 aa).

Residue His-73 participates in Zn(2+) binding. Residue Asp-75 is part of the active site. Asp-106 lines the Zn(2+) pocket. Glu-140 acts as the Proton acceptor in catalysis. Zn(2+) is bound by residues Glu-141, Glu-169, and His-366.

It belongs to the peptidase M20A family. DapE subfamily. In terms of assembly, homodimer. Zn(2+) serves as cofactor. The cofactor is Co(2+).

The enzyme catalyses N-succinyl-(2S,6S)-2,6-diaminopimelate + H2O = (2S,6S)-2,6-diaminopimelate + succinate. It functions in the pathway amino-acid biosynthesis; L-lysine biosynthesis via DAP pathway; LL-2,6-diaminopimelate from (S)-tetrahydrodipicolinate (succinylase route): step 3/3. In terms of biological role, catalyzes the hydrolysis of N-succinyl-L,L-diaminopimelic acid (SDAP), forming succinate and LL-2,6-diaminopimelate (DAP), an intermediate involved in the bacterial biosynthesis of lysine and meso-diaminopimelic acid, an essential component of bacterial cell walls. This chain is Succinyl-diaminopimelate desuccinylase, found in Rhizobium etli (strain ATCC 51251 / DSM 11541 / JCM 21823 / NBRC 15573 / CFN 42).